We begin with the raw amino-acid sequence, 201 residues long: MALGSENHSVFNDDEESSSAFNGPSVIRRNARERNRVKQVNNGFSQLRQHIPAAVIADLSNGRRGIGPGANKKLSKVSTLKMAVEYIRRLQKVLHENDQQKQKQLHLQQQHLHFQQQQQHQHLYAWHQELQLQSPTGSTSSCNSISSYCKPATSTIPGATPPNNFHTKLEASFEDYRNNSCSSGTEDEDILDYISLWQDDL.

The span at 1–10 (MALGSENHSV) shows a compositional bias: polar residues. The segment at 1–32 (MALGSENHSVFNDDEESSSAFNGPSVIRRNAR) is disordered. Residues 24 to 90 (PSVIRRNARE…KMAVEYIRRL (67 aa)) enclose the bHLH domain.

As to quaternary structure, efficient DNA binding requires dimerization with another bHLH protein. In terms of tissue distribution, l(1)SC, SC and AC strongly label the presumptive stomatogastric nervous system, while ASE is more prominent in the presumptive procephalic lobe.

Functionally, AS-C proteins are involved in the determination of the neuronal precursors in the peripheral nervous system and the central nervous system. The chain is Achaete-scute complex protein T5 (ac) from Drosophila melanogaster (Fruit fly).